Here is a 243-residue protein sequence, read N- to C-terminus: Cell division protein ZipA (243 aa).

Residues 1–4 (MSDM) lie on the Periplasmic side of the membrane. A helical transmembrane segment spans residues 5 to 25 (AMIRIGILIAGLLLVAAIFLF). Residues 26–243 (GRPKKSPQGR…APPLTKSPRW (218 aa)) lie on the Cytoplasmic side of the membrane. The interval 30–89 (KSPQGRRVDKDEGQPRERREPVISSEFGVEDDAAERAEGVEQSELNLEGQDASGGNEVGK) is disordered. Over residues 35–50 (RRVDKDEGQPRERREP) the composition is skewed to basic and acidic residues.

The protein belongs to the ZipA family. As to quaternary structure, interacts with FtsZ via their C-terminal domains.

It is found in the cell inner membrane. Functionally, essential cell division protein that stabilizes the FtsZ protofilaments by cross-linking them and that serves as a cytoplasmic membrane anchor for the Z ring. Also required for the recruitment to the septal ring of downstream cell division proteins. The chain is Cell division protein ZipA from Xanthomonas euvesicatoria pv. vesicatoria (strain 85-10) (Xanthomonas campestris pv. vesicatoria).